Here is a 151-residue protein sequence, read N- to C-terminus: Large ribosomal subunit protein uL15 (151 aa).

The segment at 1–60 is disordered; it reads MAENNPLKIHNLRPAPGAKTAKTRVGRGEASKGKTAGRGTKGTKARYQVPERFEGGQMPL.

It belongs to the universal ribosomal protein uL15 family. As to quaternary structure, part of the 50S ribosomal subunit.

Its function is as follows. Binds to the 23S rRNA. This chain is Large ribosomal subunit protein uL15, found in Streptomyces avermitilis (strain ATCC 31267 / DSM 46492 / JCM 5070 / NBRC 14893 / NCIMB 12804 / NRRL 8165 / MA-4680).